Reading from the N-terminus, the 237-residue chain is MTNELVYEGKAKRLFKTEEAGVLRVAYKDDATALNGVRKESFAGKGELNNQITSLIFSHLAEAGIESHFIRAISETEQLVKEVSIIPLEVVVRNVMAGSLAKRLGKEEGEQIPNAIVEFYYKDDALDDPFINDDHVLYLEVATTSEMDTIRQAARSINKVLQELFNQMNITLIDFKLEFGRDAAGEILLADEISPDTCRLWDKETNQKLDKDVFRRNIGNLTDVYTEVLNRLKQVQN.

Belongs to the SAICAR synthetase family.

The enzyme catalyses 5-amino-1-(5-phospho-D-ribosyl)imidazole-4-carboxylate + L-aspartate + ATP = (2S)-2-[5-amino-1-(5-phospho-beta-D-ribosyl)imidazole-4-carboxamido]succinate + ADP + phosphate + 2 H(+). The protein operates within purine metabolism; IMP biosynthesis via de novo pathway; 5-amino-1-(5-phospho-D-ribosyl)imidazole-4-carboxamide from 5-amino-1-(5-phospho-D-ribosyl)imidazole-4-carboxylate: step 1/2. The polypeptide is Phosphoribosylaminoimidazole-succinocarboxamide synthase (Listeria monocytogenes serovar 1/2a (strain ATCC BAA-679 / EGD-e)).